The following is a 466-amino-acid chain: MVFLSGNASDSSNCTHPPPPVNISKAILLGVILGGLILFGVLGNILVILSVACHRHLHSVTHYYIVNLAVADLLLTSTVLPFSAIFEILGYWAFGRVFCNVWAAVDVLCCTASIMGLCIISIDRYIGVSYPLRYPTIVTQKRGLMALLCVWALSLVISIGPLFGWRQPAPEDETICQINEEPGYVLFSALGSFYVPLTIILVMYCRVYVVAKRESRGLKSGLKTDKSDSEQVTLRIHRKNAQVGGSGVTSAKNKTHFSVRLLKFSREKKAAKTLGIVVGCFVLCWLPFFLVMPIGSFFPDFRPSETVFKIAFWLGYLNSCINPIIYPCSSQEFKKAFQNVLRIQCLRRKQSSKHTLGYTLHAPSHVLEGQHKDLVRIPVGSAETFYKISKTDGVCEWKIFSSLPRGSARMAVARDPSACTTARVRSKSFLQVCCCLGPSTPSHGENHQIPTIKIHTISLSENGEEV.

The Extracellular segment spans residues 1–27; it reads MVFLSGNASDSSNCTHPPPPVNISKAI. Asn7, Asn13, and Asn22 each carry an N-linked (GlcNAc...) asparagine glycan. Residues 28 to 51 form a helical membrane-spanning segment; sequence LLGVILGGLILFGVLGNILVILSV. The Cytoplasmic segment spans residues 52–64; that stretch reads ACHRHLHSVTHYY. A helical membrane pass occupies residues 65–88; it reads IVNLAVADLLLTSTVLPFSAIFEI. Residues 89–99 are Extracellular-facing; the sequence is LGYWAFGRVFC. Residues Cys99 and Cys176 are joined by a disulfide bond. The helical transmembrane segment at 100 to 122 threads the bilayer; it reads NVWAAVDVLCCTASIMGLCIISI. At 123-143 the chain is on the cytoplasmic side; that stretch reads DRYIGVSYPLRYPTIVTQKRG. A helical membrane pass occupies residues 144–167; the sequence is LMALLCVWALSLVISIGPLFGWRQ. At 168 to 181 the chain is on the extracellular side; that stretch reads PAPEDETICQINEE. Residues 182 to 205 form a helical membrane-spanning segment; sequence PGYVLFSALGSFYVPLTIILVMYC. Topologically, residues 206-273 are cytoplasmic; that stretch reads RVYVVAKRES…FSREKKAAKT (68 aa). Position 215 is a phosphoserine; by PKA (Ser215). A helical transmembrane segment spans residues 274 to 297; that stretch reads LGIVVGCFVLCWLPFFLVMPIGSF. Topologically, residues 298–305 are extracellular; the sequence is FPDFRPSE. The chain crosses the membrane as a helical span at residues 306-329; the sequence is TVFKIAFWLGYLNSCINPIIYPCS. Over 330–466 the chain is Cytoplasmic; that stretch reads SQEFKKAFQN…ISLSENGEEV (137 aa). A Nuclear localization signal motif is present at residues 334 to 349; it reads KKAFQNVLRIQCLRRK. Cys345 carries the S-palmitoyl cysteine lipid modification.

Belongs to the G-protein coupled receptor 1 family. Adrenergic receptor subfamily. ADRA1A sub-subfamily. Homo- and heterooligomer. Heterooligomerizes with ADRA1B homooligomers in cardiac myocytes. Interacts with CAVIN4.

It localises to the nucleus membrane. The protein resides in the cell membrane. It is found in the cytoplasm. The protein localises to the membrane. Its subcellular location is the caveola. In terms of biological role, this alpha-adrenergic receptor mediates its action by association with G proteins that activate a phosphatidylinositol-calcium second messenger system. Its effect is mediated by G(q) and G(11) proteins. Nuclear ADRA1A-ADRA1B heterooligomers regulate phenylephrine (PE)-stimulated ERK signaling in cardiac myocytes. The chain is Alpha-1A adrenergic receptor (ADRA1A) from Bos taurus (Bovine).